Consider the following 159-residue polypeptide: Transcriptional repressor NrdR (159 aa).

A zinc finger lies at 3–34 (CPTCQNTDSRVLESRSADTGKSVRRRRECLNC). The region spanning 49–139 (ISVLKKDGSR…VYRKFNGVKD (91 aa)) is the ATP-cone domain.

Belongs to the NrdR family. Zn(2+) is required as a cofactor.

Its function is as follows. Negatively regulates transcription of bacterial ribonucleotide reductase nrd genes and operons by binding to NrdR-boxes. The sequence is that of Transcriptional repressor NrdR from Prochlorococcus marinus (strain MIT 9515).